The primary structure comprises 576 residues: Aspartate--tRNA ligase, cytoplasmic 1 (576 aa).

A disordered region spans residues 1 to 78; that stretch reads MSETTPVPVG…NWGELPMNQS (78 aa). Over residues 20 to 43 the composition is skewed to basic and acidic residues; sequence LKKEQKKLEKEKKIAEAKAKKAAE. L-aspartate is bound at residue Glu-302. The tract at residues 324 to 327 is aspartate; it reads QLYK. Arg-346 contacts L-aspartate. Residues 346–348, 354–356, and Glu-499 each bind ATP; these read RAE and RHL. Residues Ser-502 and Arg-506 each coordinate L-aspartate. Residue 547 to 550 coordinates ATP; sequence GLER.

The protein belongs to the class-II aminoacyl-tRNA synthetase family. Type 2 subfamily.

Its subcellular location is the cytoplasm. The enzyme catalyses tRNA(Asp) + L-aspartate + ATP = L-aspartyl-tRNA(Asp) + AMP + diphosphate. This is Aspartate--tRNA ligase, cytoplasmic 1 (aspS1) from Dictyostelium discoideum (Social amoeba).